A 197-amino-acid chain; its full sequence is Imidazoleglycerol-phosphate dehydratase (197 aa).

It belongs to the imidazoleglycerol-phosphate dehydratase family.

It localises to the cytoplasm. It catalyses the reaction D-erythro-1-(imidazol-4-yl)glycerol 3-phosphate = 3-(imidazol-4-yl)-2-oxopropyl phosphate + H2O. It functions in the pathway amino-acid biosynthesis; L-histidine biosynthesis; L-histidine from 5-phospho-alpha-D-ribose 1-diphosphate: step 6/9. This Methanocaldococcus jannaschii (strain ATCC 43067 / DSM 2661 / JAL-1 / JCM 10045 / NBRC 100440) (Methanococcus jannaschii) protein is Imidazoleglycerol-phosphate dehydratase.